An 83-amino-acid polypeptide reads, in one-letter code: uncharacterized protein (83 aa).

2 helical membrane passes run 23-43 (GGCY…SAIA) and 49-69 (SLWW…VVYG).

It localises to the cell membrane. This is an uncharacterized protein from Mycobacterium tuberculosis (strain CDC 1551 / Oshkosh).